The following is a 424-amino-acid chain: Histidine--tRNA ligase (424 aa).

This sequence belongs to the class-II aminoacyl-tRNA synthetase family. Homodimer.

Its subcellular location is the cytoplasm. It catalyses the reaction tRNA(His) + L-histidine + ATP = L-histidyl-tRNA(His) + AMP + diphosphate + H(+). The protein is Histidine--tRNA ligase of Shewanella amazonensis (strain ATCC BAA-1098 / SB2B).